The chain runs to 180 residues: NEDD8-conjugating enzyme ubc-12 (180 aa).

A UBC core domain is found at 24–180 (VRDKLLAQEL…RVREYISRYC (157 aa)). C112 serves as the catalytic Glycyl thioester intermediate.

It belongs to the ubiquitin-conjugating enzyme family. UBC12 subfamily.

The protein resides in the cytoplasm. The catalysed reaction is [E1 NEDD8-activating enzyme]-S-[NEDD8 protein]-yl-L-cysteine + [E2 NEDD8-conjugating enzyme]-L-cysteine = [E1 NEDD8-activating enzyme]-L-cysteine + [E2 NEDD8-conjugating enzyme]-S-[NEDD8-protein]-yl-L-cysteine.. It participates in protein modification; protein neddylation. Functionally, accepts the ubiquitin-like protein NEDD8 from the uba-3-ula-1 E1 complex and catalyzes its covalent attachment to other proteins. Plays a role in male tail tip morphogenesis. In Caenorhabditis elegans, this protein is NEDD8-conjugating enzyme ubc-12.